Here is a 237-residue protein sequence, read N- to C-terminus: 1-(5-phosphoribosyl)-5-[(5-phosphoribosylamino)methylideneamino] imidazole-4-carboxamide isomerase (237 aa).

The Proton acceptor role is filled by aspartate 8. The active-site Proton donor is aspartate 127.

The protein belongs to the HisA/HisF family.

It localises to the cytoplasm. It catalyses the reaction 1-(5-phospho-beta-D-ribosyl)-5-[(5-phospho-beta-D-ribosylamino)methylideneamino]imidazole-4-carboxamide = 5-[(5-phospho-1-deoxy-D-ribulos-1-ylimino)methylamino]-1-(5-phospho-beta-D-ribosyl)imidazole-4-carboxamide. It participates in amino-acid biosynthesis; L-histidine biosynthesis; L-histidine from 5-phospho-alpha-D-ribose 1-diphosphate: step 4/9. The sequence is that of 1-(5-phosphoribosyl)-5-[(5-phosphoribosylamino)methylideneamino] imidazole-4-carboxamide isomerase from Sulfurovum sp. (strain NBC37-1).